An 80-amino-acid chain; its full sequence is Translation initiation factor IF-1 (80 aa).

An S1-like domain is found at 6–80; it reads EKKKKDESDS…TSRGRIVYRR (75 aa).

The protein belongs to the IF-1 family. In terms of assembly, component of the 30S ribosomal translation pre-initiation complex which assembles on the 30S ribosome in the order IF-2 and IF-3, IF-1 and N-formylmethionyl-tRNA(fMet); mRNA recruitment can occur at any time during PIC assembly.

The protein localises to the cytoplasm. Its function is as follows. One of the essential components for the initiation of protein synthesis. Stabilizes the binding of IF-2 and IF-3 on the 30S subunit to which N-formylmethionyl-tRNA(fMet) subsequently binds. Helps modulate mRNA selection, yielding the 30S pre-initiation complex (PIC). Upon addition of the 50S ribosomal subunit IF-1, IF-2 and IF-3 are released leaving the mature 70S translation initiation complex. In Deinococcus radiodurans (strain ATCC 13939 / DSM 20539 / JCM 16871 / CCUG 27074 / LMG 4051 / NBRC 15346 / NCIMB 9279 / VKM B-1422 / R1), this protein is Translation initiation factor IF-1.